The chain runs to 187 residues: Photosystem I assembly protein Ycf4 (187 aa).

2 helical membrane-spanning segments follow: residues 25-47 (YWWA…SSYL) and 62-84 (FVPQ…IYLW).

The protein belongs to the Ycf4 family.

The protein resides in the plastid. It localises to the chloroplast thylakoid membrane. Functionally, seems to be required for the assembly of the photosystem I complex. The protein is Photosystem I assembly protein Ycf4 of Mesostigma viride (Green alga).